Consider the following 530-residue polypeptide: UDP-glucuronosyltransferase 2B17 (530 aa).

A signal peptide spans 1–23 (MSLKWMSVFLLMQLSCYFSSGSC). A glycan (N-linked (GlcNAc...) asparagine) is linked at Asn65. The residue at position 136 (Lys136) is an N6-succinyllysine. Residues Asn316 and Asn483 are each glycosylated (N-linked (GlcNAc...) asparagine). Residues 495-515 (IAFLLACVATMIFMITKCCLF) traverse the membrane as a helical segment.

It belongs to the UDP-glycosyltransferase family. As to expression, expressed in various tissues including the liver, kidney, testis, uterus, placenta, mammary gland, adrenal gland, skin and prostate.

It localises to the endoplasmic reticulum membrane. It catalyses the reaction glucuronate acceptor + UDP-alpha-D-glucuronate = acceptor beta-D-glucuronoside + UDP + H(+). The catalysed reaction is 17alpha-estradiol + UDP-alpha-D-glucuronate = 17alpha-estradiol 3-O-(beta-D-glucuronate) + UDP + H(+). It carries out the reaction 17alpha-estradiol + UDP-alpha-D-glucuronate = 17alpha-estradiol 17-O-(beta-D-glucuronate) + UDP + H(+). The enzyme catalyses 17beta-estradiol + UDP-alpha-D-glucuronate = 17beta-estradiol 17-O-(beta-D-glucuronate) + UDP + H(+). It catalyses the reaction 17beta-hydroxy-5alpha-androstan-3-one + UDP-alpha-D-glucuronate = 5alpha-dihydrotestosterone 17-O-(beta-D-glucuronate) + UDP + H(+). The catalysed reaction is testosterone + UDP-alpha-D-glucuronate = testosterone 17-O-(beta-D-glucuronate) + UDP + H(+). Functionally, UDP-glucuronosyltransferase (UGT) that catalyzes phase II biotransformation reactions in which lipophilic substrates are conjugated with glucuronic acid to increase the metabolite's water solubility, thereby facilitating excretion into either the urine or bile. Catalyzes the glucuronidation of endogenous steroid hormones such as androgens (epitestosterone, androsterone) and estrogens (estradiol, epiestradiol). This Homo sapiens (Human) protein is UDP-glucuronosyltransferase 2B17.